Here is an 88-residue protein sequence, read N- to C-terminus: MKKRQVVIKQRKSSYTMTSSSSNVRYVECQKNHAANIGGYAVDGCREFMASGGDDALTCAACGCHRNFHRREVDTEVVCEYSPPNANN.

A ZF-HD dimerization-type; degenerate zinc finger spans residues 26–72; that stretch reads YVECQKNHAANIGGYAVDGCREFMASGGDDALTCAACGCHRNFHRRE.

As to quaternary structure, homo- and heterodimers. Interacts with ZHD3, ZHD5, ZHD6, ZHD7, ZHD8, ZHD9, ZHD10 and ZHD13. Mostly expressed in roots, stems and flowers, present in seedlings and leaves, and weakly observed in inflorescence and siliques.

It is found in the cytoplasm. Functionally, inhibits zinc finger homeodomain (ZHD) transcription factors by interacting with them to prevent both their nuclear localization and their DNA-binding properties. Involved in integrating signals from multiple hormones by regulating the expression of specific genes. Promotes the formation of ectopic shoot meristems on leaf margins. This is Mini zinc finger protein 3 (MIF3) from Arabidopsis thaliana (Mouse-ear cress).